The chain runs to 574 residues: Serine/threonine-protein kinase fray1 (574 aa).

Residues 24–41 show a composition bias toward basic and acidic residues; that stretch reads NHHDLPDSDSDSSSREEE. The tract at residues 24 to 64 is disordered; that stretch reads NHHDLPDSDSDSSSREEELMNSSGGGNGKEPIGEKKKLPSH. Positions 97–357 constitute a Protein kinase domain; sequence YNLIEPIGEG…ASKLLEHKVF (261 aa). ATP is bound by residues 103–111 and Lys126; that span reads IGEGTEGRV. Asp221 acts as the Proton acceptor in catalysis. Thr256 is modified (phosphothreonine; by autocatalysis). 3 disordered regions span residues 381 to 447, 462 to 514, and 532 to 554; these read YRES…LVNM, LSSG…PEKE, and FGSPKEGDHNHQHHKSEGDHEHH. 3 stretches are compositionally biased toward low complexity: residues 386–403, 418–441, and 462–475; these read SPASSNTPSPDSSRPSSP, KNIKPSSLNKSSSSLELKNKNLSN, and LSSGSGPLSQSSDL. The segment covering 478–491 has biased composition (basic residues); sequence GHLHKIGTPKKKHS. Residues 492-506 show a composition bias toward low complexity; sequence PSGSIGDSHGSISPP. Residues 536-553 show a composition bias toward basic and acidic residues; sequence KEGDHNHQHHKSEGDHEH.

This sequence belongs to the protein kinase superfamily. STE Ser/Thr protein kinase family. STE20 subfamily. Mn(2+) is required as a cofactor. In terms of processing, undergoes autophosphorylation in the catalytic domain.

The enzyme catalyses L-seryl-[protein] + ATP = O-phospho-L-seryl-[protein] + ADP + H(+). It carries out the reaction L-threonyl-[protein] + ATP = O-phospho-L-threonyl-[protein] + ADP + H(+). The protein is Serine/threonine-protein kinase fray1 of Dictyostelium discoideum (Social amoeba).